The chain runs to 303 residues: Coenzyme PQQ synthesis protein B (303 aa).

Belongs to the PqqB family.

It participates in cofactor biosynthesis; pyrroloquinoline quinone biosynthesis. May be involved in the transport of PQQ or its precursor to the periplasm. The sequence is that of Coenzyme PQQ synthesis protein B from Acinetobacter baumannii (strain SDF).